A 155-amino-acid chain; its full sequence is Small ribosomal subunit protein uS7c (155 aa).

It belongs to the universal ribosomal protein uS7 family. Part of the 30S ribosomal subunit.

It localises to the plastid. The protein resides in the chloroplast. Its function is as follows. One of the primary rRNA binding proteins, it binds directly to 16S rRNA where it nucleates assembly of the head domain of the 30S subunit. This Canella winterana (Wild cinnamon) protein is Small ribosomal subunit protein uS7c (rps7).